Here is a 184-residue protein sequence, read N- to C-terminus: Photosystem I assembly protein Ycf4 (184 aa).

The next 2 membrane-spanning stretches (helical) occupy residues 22–42 and 57–77; these read FGWA…GASS and IVFF…LFIS.

The protein belongs to the Ycf4 family.

It is found in the plastid. It localises to the chloroplast thylakoid membrane. Functionally, seems to be required for the assembly of the photosystem I complex. The sequence is that of Photosystem I assembly protein Ycf4 from Acorus calamus (Sweet flag).